Reading from the N-terminus, the 245-residue chain is Phosphoadenosine 5'-phosphosulfate reductase (245 aa).

Cysteine 239 (nucleophile; cysteine thiosulfonate intermediate) is an active-site residue.

The protein belongs to the PAPS reductase family. CysH subfamily.

It is found in the cytoplasm. It carries out the reaction [thioredoxin]-disulfide + sulfite + adenosine 3',5'-bisphosphate + 2 H(+) = [thioredoxin]-dithiol + 3'-phosphoadenylyl sulfate. Its pathway is sulfur metabolism; hydrogen sulfide biosynthesis; sulfite from sulfate: step 3/3. Catalyzes the formation of sulfite from phosphoadenosine 5'-phosphosulfate (PAPS) using thioredoxin as an electron donor. This Shewanella oneidensis (strain ATCC 700550 / JCM 31522 / CIP 106686 / LMG 19005 / NCIMB 14063 / MR-1) protein is Phosphoadenosine 5'-phosphosulfate reductase.